A 292-amino-acid chain; its full sequence is Elongation factor Ts (292 aa).

The segment at 80–83 is involved in Mg(2+) ion dislocation from EF-Tu; sequence TDFV.

Belongs to the EF-Ts family.

Its subcellular location is the cytoplasm. In terms of biological role, associates with the EF-Tu.GDP complex and induces the exchange of GDP to GTP. It remains bound to the aminoacyl-tRNA.EF-Tu.GTP complex up to the GTP hydrolysis stage on the ribosome. The protein is Elongation factor Ts of Ralstonia pickettii (strain 12J).